The primary structure comprises 350 residues: Inactive ADP-ribosyltransferase arh2 (350 aa).

Belongs to the ADP-ribosylglycohydrolase family.

It localises to the cytoplasm. The protein localises to the myofibril. Its subcellular location is the sarcomere. In terms of biological role, required for myofibril assembly and outgrowth of the cardiac chambers in the developing heart. Appears to be catalytically inactive, showing no activity against O-acetyl-ADP-ribose. This chain is Inactive ADP-ribosyltransferase arh2 (adprhl1), found in Danio rerio (Zebrafish).